Reading from the N-terminus, the 1024-residue chain is Eukaryotic translation initiation factor 3 subunit A (1024 aa).

Residues 331 to 508 (VISSNAPGTG…QAITFQDDVF (178 aa)) enclose the PCI domain. Coiled-coil stretches lie at residues 575–717 (AAED…REEA) and 777–889 (KRRG…RRSR). Basic and acidic residues-rich tracts occupy residues 797 to 866 (KERR…ERRA) and 873 to 886 (DKQRQREEEAEANR). Disordered stretches follow at residues 797–973 (KERR…GAYR) and 1001–1024 (AAAAESDGFTEVKKNVYRPPGRRA). Low complexity-rich tracts occupy residues 890-906 (AAGTGAAPAQELAAADA) and 946-971 (KEAAGGNATAAPSAPAAAPAPASSGA).

Belongs to the eIF-3 subunit A family. In terms of assembly, component of the eukaryotic translation initiation factor 3 (eIF-3) complex.

Its subcellular location is the cytoplasm. Its function is as follows. RNA-binding component of the eukaryotic translation initiation factor 3 (eIF-3) complex, which is involved in protein synthesis of a specialized repertoire of mRNAs and, together with other initiation factors, stimulates binding of mRNA and methionyl-tRNAi to the 40S ribosome. The eIF-3 complex specifically targets and initiates translation of a subset of mRNAs involved in cell proliferation. This Mycosarcoma maydis (Corn smut fungus) protein is Eukaryotic translation initiation factor 3 subunit A.